An 84-amino-acid polypeptide reads, in one-letter code: Small ribosomal subunit protein uS17 (84 aa).

It belongs to the universal ribosomal protein uS17 family. In terms of assembly, part of the 30S ribosomal subunit.

One of the primary rRNA binding proteins, it binds specifically to the 5'-end of 16S ribosomal RNA. This is Small ribosomal subunit protein uS17 from Proteus mirabilis (strain HI4320).